The following is a 166-amino-acid chain: Interferon gamma (166 aa).

The N-terminal stretch at 1–23 (MNYTSYILAFQLCVILCSSGCNC) is a signal peptide. Position 24 is a pyrrolidone carboxylic acid (glutamine 24). Residues asparagine 39 and asparagine 106 are each glycosylated (N-linked (GlcNAc...) asparagine).

The protein belongs to the type II (or gamma) interferon family. Homodimer. Interacts with IFNGR1 (via extracellular domain); this interaction promotes IFNGR1 dimerization. Released primarily from activated T lymphocytes.

The protein resides in the secreted. Type II interferon produced by immune cells such as T-cells and NK cells that plays crucial roles in antimicrobial, antiviral, and antitumor responses by activating effector immune cells and enhancing antigen presentation. Primarily signals through the JAK-STAT pathway after interaction with its receptor IFNGR1 to affect gene regulation. Upon IFNG binding, IFNGR1 intracellular domain opens out to allow association of downstream signaling components JAK2, JAK1 and STAT1, leading to STAT1 activation, nuclear translocation and transcription of IFNG-regulated genes. Many of the induced genes are transcription factors such as IRF1 that are able to further drive regulation of a next wave of transcription. Plays a role in class I antigen presentation pathway by inducing a replacement of catalytic proteasome subunits with immunoproteasome subunits. In turn, increases the quantity, quality, and repertoire of peptides for class I MHC loading. Increases the efficiency of peptide generation also by inducing the expression of activator PA28 that associates with the proteasome and alters its proteolytic cleavage preference. Up-regulates as well MHC II complexes on the cell surface by promoting expression of several key molecules such as cathepsins B/CTSB, H/CTSH, and L/CTSL. Participates in the regulation of hematopoietic stem cells during development and under homeostatic conditions by affecting their development, quiescence, and differentiation. The sequence is that of Interferon gamma (IFNG) from Canis lupus familiaris (Dog).